The chain runs to 178 residues: Large ribosomal subunit protein uL5 (178 aa).

The protein belongs to the universal ribosomal protein uL5 family. In terms of assembly, part of the 50S ribosomal subunit; part of the 5S rRNA/L5/L18/L25 subcomplex. Contacts the 5S rRNA and the P site tRNA. Forms a bridge to the 30S subunit in the 70S ribosome.

This is one of the proteins that bind and probably mediate the attachment of the 5S RNA into the large ribosomal subunit, where it forms part of the central protuberance. In the 70S ribosome it contacts protein S13 of the 30S subunit (bridge B1b), connecting the 2 subunits; this bridge is implicated in subunit movement. Contacts the P site tRNA; the 5S rRNA and some of its associated proteins might help stabilize positioning of ribosome-bound tRNAs. This Prochlorococcus marinus (strain MIT 9515) protein is Large ribosomal subunit protein uL5.